The following is a 101-amino-acid chain: Small ribosomal subunit protein cS23 (101 aa).

The protein belongs to the chloroplast-specific ribosomal protein cS23 family. Part of the 30S ribosomal subunit.

It localises to the plastid. Its subcellular location is the chloroplast. Functionally, probably a ribosomal protein or a ribosome-associated protein. The chain is Small ribosomal subunit protein cS23 (ycf65) from Euglena stellata.